The chain runs to 566 residues: Amidophosphoribosyltransferase 1, chloroplastic (566 aa).

Residues 1–13 (MAATTSFSSSLSL) are compositionally biased toward low complexity. Disordered regions lie at residues 1–28 (MAAT…QPLP) and 58–87 (VSSY…DEKP). The transit peptide at 1 to 58 (MAATTSFSSSLSLITKPNNSSYTNQPLPLFPKPFLKPPHLSLLPSPLSSPPPSLIHGV) directs the protein to the chloroplast. A compositionally biased stretch (polar residues) spans 15–25 (TKPNNSSYTNQ). Low complexity predominate over residues 59 to 68 (SSYFSSPSPS). The segment covering 70-87 (DNSHTPFDYHNDEDDEKP) has biased composition (basic and acidic residues). Catalysis depends on C91, which acts as the Nucleophile. Residues 91 to 311 (CGVVGIYGDP…PGEVLVVDKD (221 aa)) enclose the Glutamine amidotransferase type-2 domain. The [4Fe-4S] cluster site is built by C327, C473, C524, and C527.

In the C-terminal section; belongs to the purine/pyrimidine phosphoribosyltransferase family. The cofactor is [4Fe-4S] cluster. Mg(2+) is required as a cofactor. As to expression, expressed in flowers and roots. Also present in leaves, and, to a lower extent, in cotyledons.

The protein localises to the plastid. The protein resides in the chloroplast stroma. The enzyme catalyses 5-phospho-beta-D-ribosylamine + L-glutamate + diphosphate = 5-phospho-alpha-D-ribose 1-diphosphate + L-glutamine + H2O. It functions in the pathway purine metabolism; IMP biosynthesis via de novo pathway; N(1)-(5-phospho-D-ribosyl)glycinamide from 5-phospho-alpha-D-ribose 1-diphosphate: step 1/2. Functionally, catalyzes the first committed step of 'de novo' purine biosynthesis from glutamine. Involved in plastid biogenesis and cell division. This chain is Amidophosphoribosyltransferase 1, chloroplastic (ASE1), found in Arabidopsis thaliana (Mouse-ear cress).